Reading from the N-terminus, the 639-residue chain is Synaptotagmin-16 (639 aa).

Over residues 95 to 119 (NSDLQDSVQTASPTLGQQAEDSSSV) the composition is skewed to polar residues. The segment at 95 to 191 (NSDLQDSVQT…SSESDEDVTK (97 aa)) is disordered. The segment covering 121–134 (PPWPSKIPGAPKPQ) has biased composition (pro residues). The segment covering 142–151 (EEDHHSERQR) has biased composition (basic and acidic residues). Residues 174 to 187 (GDDEEPSTSSESDE) are compositionally biased toward acidic residues. The region spanning 344 to 463 (KCGDLDVIFE…HPEGEMKVTL (120 aa)) is the C2 1 domain. Residues 470-496 (NLSSGESPLSPSVVSHSDSASSTQSLS) form a disordered region. Residues 476-496 (SPLSPSVVSHSDSASSTQSLS) show a composition bias toward low complexity. A C2 2 domain is found at 499–634 (GVPELLVGLS…SKGQQTCRWH (136 aa)).

The protein belongs to the synaptotagmin family. Homodimer. Can also form heterodimers. As to expression, highly expressed in heart and testis. Moderately expressed in kidney.

Functionally, may be involved in the trafficking and exocytosis of secretory vesicles in non-neuronal tissues. Is Ca(2+)-independent. The sequence is that of Synaptotagmin-16 (Syt16) from Mus musculus (Mouse).